Reading from the N-terminus, the 776-residue chain is MLNSARTVLARHSARQLYRFRGCLVHQQRHRHQVQRTLATHVQRHLPASLDDKALVALFDQPNGSKLRSPFNTTGLFGHPNLTHPRALVSLAESTLVRAQLLTQRILEAGKSEHELAKVVKNLDRLSDMLCGVIDLAELVRNAHPDRLWVEAANHAYETLCEFMNVLNTHTGLYEVLKQVLSNPTLVNSLSPEAYQTALIFWRDFEKSAIDLPPAQRNKFVSLSSDILVLGRQFLENASTPRPPTSIKASDLAGLKDKGMGVRLQLQAQFTNRDLQIYPGSLQAHMIMRSAPNEEPRRRLYLAANSSTQEQIEVLEALLKKRAELAQLVGRESFAHMTLDDKMAKTPDNVTNFLDALIDHTRPFARSALRTLAQRKQAHHGLSSLPIIQAWDRDFYCPPDPPAPPIPLPPLTLGTVFMGLSRLFRHLYGVSLRPVPSASGEVWHTDVQKLEVVDEDQGIIGWIYADLFARRGKASGAAHYTVRCSRRTDDDDEQGDGMFEGAELQILESQEFEAVKRHRLPNQEGVFQLPLVVLLCEFTRPTVSKGGTILEWHEVQTLFHEMGHAMHSMLGRTEYQNVSGTRCATDFVELPSILMEHFLNSPAVLSLFDADGTSTLRQIGNHHHDPCHAIDTYSQIMLAVVDQIYHSPTVLDPSFDSTREYGNLQNTRGLIPYVPGTSYQTQFGHLFGYGATYYSYLFDRAIASRVWSKVFSKDPLDRELGEKYKREVLRWGGARDPWEMVATLLDAPELAAGDAEAMREVGRWRIEDEVGVGGRH.

The transit peptide at 1–38 directs the protein to the mitochondrion; that stretch reads MLNSARTVLARHSARQLYRFRGCLVHQQRHRHQVQRTL. Zn(2+) is bound at residue H560. The active site involves E561. Positions 564 and 567 each coordinate Zn(2+).

This sequence belongs to the peptidase M3 family. Zn(2+) serves as cofactor.

It localises to the mitochondrion matrix. It carries out the reaction Release of an N-terminal octapeptide as second stage of processing of some proteins imported into the mitochondrion.. Cleaves proteins, imported into the mitochondrion, to their mature size. While most mitochondrial precursor proteins are processed to the mature form in one step by mitochondrial processing peptidase (MPP), the sequential cleavage by MIP of an octapeptide after initial processing by MPP is a required step for a subgroup of nuclear-encoded precursor proteins destined for the matrix or the inner membrane. The protein is Mitochondrial intermediate peptidase (OCT1) of Coprinopsis cinerea (strain Okayama-7 / 130 / ATCC MYA-4618 / FGSC 9003) (Inky cap fungus).